A 394-amino-acid polypeptide reads, in one-letter code: MSKEKFERSKPHVNVGTIGHVDHGKTTLTAAITTVLAKTYGGSARAFDQIDNAPEEKARGITINTSHVEYDTPSRHYAHVDCPGHADYVKNMITGAAQMDGAILVVAATDGPMPQTREHILLGRQVGVPFIIVFMNKCDMVDDEELLELVEMEVRELLSAYDFPGDDLPVVRGSALKALEGEAEWEAKIIELAGYLDSYIPEPERAIDKPFLLPIEDVFSISGRGTVVTGRVERGIVKVGEEVEIVGIKDTVKSTCTGVEMFRKLLDEGRAGENVGVLLRGIKREDIERGQVLAKPGSIKPHTKFDSEVYILSKEEGGRHTPFFKGYRPQFYFRTTDVTGTIELPEGVEMVMPGDNVNMVVTLIHPIAMDDGLRFAIREGGRTVGAGVVAKVIA.

The region spanning 10–204 (KPHVNVGTIG…YLDSYIPEPE (195 aa)) is the tr-type G domain. Residues 19 to 26 (GHVDHGKT) are G1. 19–26 (GHVDHGKT) provides a ligand contact to GTP. Thr-26 contributes to the Mg(2+) binding site. Positions 60–64 (GITIN) are G2. Residues 81 to 84 (DCPG) form a G3 region. Residues 81–85 (DCPGH) and 136–139 (NKCD) each bind GTP. The G4 stretch occupies residues 136–139 (NKCD). The interval 174–176 (SAL) is G5.

This sequence belongs to the TRAFAC class translation factor GTPase superfamily. Classic translation factor GTPase family. EF-Tu/EF-1A subfamily. As to quaternary structure, monomer.

It is found in the cytoplasm. It carries out the reaction GTP + H2O = GDP + phosphate + H(+). Functionally, GTP hydrolase that promotes the GTP-dependent binding of aminoacyl-tRNA to the A-site of ribosomes during protein biosynthesis. In Serratia proteamaculans (strain 568), this protein is Elongation factor Tu 2.